Here is a 115-residue protein sequence, read N- to C-terminus: Cell division topological specificity factor (115 aa).

Positions 89–115 (TGQIQLKEPKNQSEVDSPETEGKDQNS) are disordered.

The protein belongs to the MinE family.

In terms of biological role, prevents the cell division inhibition by proteins MinC and MinD at internal division sites while permitting inhibition at polar sites. This ensures cell division at the proper site by restricting the formation of a division septum at the midpoint of the long axis of the cell. The polypeptide is Cell division topological specificity factor (Prochlorococcus marinus (strain NATL2A)).